A 431-amino-acid chain; its full sequence is Histidinol dehydrogenase (431 aa).

Tyr124, Gln187, and Asn210 together coordinate NAD(+). Residues Ser236, Gln258, and His261 each coordinate substrate. Zn(2+) contacts are provided by Gln258 and His261. Catalysis depends on proton acceptor residues Glu325 and His326. 4 residues coordinate substrate: His326, Asp359, Glu413, and His418. Asp359 contacts Zn(2+). His418 lines the Zn(2+) pocket.

Belongs to the histidinol dehydrogenase family. The cofactor is Zn(2+).

It catalyses the reaction L-histidinol + 2 NAD(+) + H2O = L-histidine + 2 NADH + 3 H(+). It functions in the pathway amino-acid biosynthesis; L-histidine biosynthesis; L-histidine from 5-phospho-alpha-D-ribose 1-diphosphate: step 9/9. Catalyzes the sequential NAD-dependent oxidations of L-histidinol to L-histidinaldehyde and then to L-histidine. This chain is Histidinol dehydrogenase, found in Legionella pneumophila (strain Lens).